The chain runs to 690 residues: Elongation factor G (690 aa).

One can recognise a tr-type G domain in the interval 8–283 (EDYRNFGIMA…AVVDYLPSPV (276 aa)). GTP-binding positions include 17–24 (AHIDAGKT), 81–85 (DTPGH), and 135–138 (NKMD).

Belongs to the TRAFAC class translation factor GTPase superfamily. Classic translation factor GTPase family. EF-G/EF-2 subfamily.

It is found in the cytoplasm. Its function is as follows. Catalyzes the GTP-dependent ribosomal translocation step during translation elongation. During this step, the ribosome changes from the pre-translocational (PRE) to the post-translocational (POST) state as the newly formed A-site-bound peptidyl-tRNA and P-site-bound deacylated tRNA move to the P and E sites, respectively. Catalyzes the coordinated movement of the two tRNA molecules, the mRNA and conformational changes in the ribosome. This Rhodopseudomonas palustris (strain BisB5) protein is Elongation factor G.